The primary structure comprises 232 residues: tRNA (guanine-N(7)-)-methyltransferase (232 aa).

4 residues coordinate S-adenosyl-L-methionine: E63, E88, D115, and D137. D137 is an active-site residue. Substrate is bound by residues K141, D173, and 211-214 (TRYE).

It belongs to the class I-like SAM-binding methyltransferase superfamily. TrmB family.

The enzyme catalyses guanosine(46) in tRNA + S-adenosyl-L-methionine = N(7)-methylguanosine(46) in tRNA + S-adenosyl-L-homocysteine. It functions in the pathway tRNA modification; N(7)-methylguanine-tRNA biosynthesis. In terms of biological role, catalyzes the formation of N(7)-methylguanine at position 46 (m7G46) in tRNA. The protein is tRNA (guanine-N(7)-)-methyltransferase of Chelativorans sp. (strain BNC1).